The chain runs to 583 residues: L-galactono-1,4-lactone dehydrogenase 2, mitochondrial (583 aa).

Residues 1-36 (MRRLLLAGILRRASSSPSSHHHLHLVRALSASSPLP) constitute a mitochondrion transit peptide. Positions 37-78 (ASDADLRKYAGYALLLLGCGAATYYSFPLPPDALHKKAVPFK) are cleaved as a propeptide — removed in mature form. A helical transmembrane segment spans residues 45–61 (YAGYALLLLGCGAATYY). Residues 95 to 266 (THEVHTRVLL…AEVTLQCVER (172 aa)) form the FAD-binding PCMH-type domain.

FAD is required as a cofactor.

The protein localises to the mitochondrion membrane. The catalysed reaction is L-galactono-1,4-lactone + 4 Fe(III)-[cytochrome c] = L-dehydroascorbate + 4 Fe(II)-[cytochrome c] + 5 H(+). The protein operates within cofactor biosynthesis; L-ascorbate biosynthesis. Its function is as follows. Involved in the biosynthesis of ascorbic acid. This is L-galactono-1,4-lactone dehydrogenase 2, mitochondrial (GLDH2) from Oryza sativa subsp. japonica (Rice).